Reading from the N-terminus, the 299-residue chain is tRNA dimethylallyltransferase (299 aa).

10–17 (GPTAVGKT) contacts ATP. Position 12 to 17 (12 to 17 (TAVGKT)) interacts with substrate. The segment at 35-38 (DSQQ) is interaction with substrate tRNA.

It belongs to the IPP transferase family. As to quaternary structure, monomer. It depends on Mg(2+) as a cofactor.

The enzyme catalyses adenosine(37) in tRNA + dimethylallyl diphosphate = N(6)-dimethylallyladenosine(37) in tRNA + diphosphate. In terms of biological role, catalyzes the transfer of a dimethylallyl group onto the adenine at position 37 in tRNAs that read codons beginning with uridine, leading to the formation of N6-(dimethylallyl)adenosine (i(6)A). The polypeptide is tRNA dimethylallyltransferase (Streptococcus thermophilus (strain CNRZ 1066)).